We begin with the raw amino-acid sequence, 104 residues long: Disrupted in renal carcinoma protein 1 (104 aa).

The segment at 1-23 (MPEAHMQPAKLQTSLPTTDHGSK) is disordered. The segment covering 10–19 (KLQTSLPTTD) has biased composition (polar residues).

Expressed at low steady-state level in adult placenta, testis, ovary, prostate, fetal kidney, spleen and skeletal muscle.

In Homo sapiens (Human), this protein is Disrupted in renal carcinoma protein 1 (DIRC1).